A 272-amino-acid polypeptide reads, in one-letter code: Ribosomal RNA small subunit methyltransferase A (272 aa).

6 residues coordinate S-adenosyl-L-methionine: Asn-18, Leu-20, Gly-45, Glu-66, Asp-91, and Asn-113.

Belongs to the class I-like SAM-binding methyltransferase superfamily. rRNA adenine N(6)-methyltransferase family. RsmA subfamily.

It is found in the cytoplasm. The catalysed reaction is adenosine(1518)/adenosine(1519) in 16S rRNA + 4 S-adenosyl-L-methionine = N(6)-dimethyladenosine(1518)/N(6)-dimethyladenosine(1519) in 16S rRNA + 4 S-adenosyl-L-homocysteine + 4 H(+). Functionally, specifically dimethylates two adjacent adenosines (A1518 and A1519) in the loop of a conserved hairpin near the 3'-end of 16S rRNA in the 30S particle. May play a critical role in biogenesis of 30S subunits. In Proteus mirabilis (strain HI4320), this protein is Ribosomal RNA small subunit methyltransferase A.